Here is a 946-residue protein sequence, read N- to C-terminus: Bifunctional glutamine synthetase adenylyltransferase/adenylyl-removing enzyme (946 aa).

Residues 1-440 (MKPLSSPLQQ…VFNELIGDDE (440 aa)) are adenylyl removase. The interval 449–946 (SEQWRELWQD…ASWQKWLVEE (498 aa)) is adenylyl transferase.

Belongs to the GlnE family. Mg(2+) is required as a cofactor.

The enzyme catalyses [glutamine synthetase]-O(4)-(5'-adenylyl)-L-tyrosine + phosphate = [glutamine synthetase]-L-tyrosine + ADP. It carries out the reaction [glutamine synthetase]-L-tyrosine + ATP = [glutamine synthetase]-O(4)-(5'-adenylyl)-L-tyrosine + diphosphate. Its function is as follows. Involved in the regulation of glutamine synthetase GlnA, a key enzyme in the process to assimilate ammonia. When cellular nitrogen levels are high, the C-terminal adenylyl transferase (AT) inactivates GlnA by covalent transfer of an adenylyl group from ATP to specific tyrosine residue of GlnA, thus reducing its activity. Conversely, when nitrogen levels are low, the N-terminal adenylyl removase (AR) activates GlnA by removing the adenylyl group by phosphorolysis, increasing its activity. The regulatory region of GlnE binds the signal transduction protein PII (GlnB) which indicates the nitrogen status of the cell. The protein is Bifunctional glutamine synthetase adenylyltransferase/adenylyl-removing enzyme of Escherichia coli O8 (strain IAI1).